The primary structure comprises 103 residues: Large ribosomal subunit protein bL21 (103 aa).

The protein belongs to the bacterial ribosomal protein bL21 family. In terms of assembly, part of the 50S ribosomal subunit. Contacts protein L20.

In terms of biological role, this protein binds to 23S rRNA in the presence of protein L20. This Haemophilus influenzae (strain PittEE) protein is Large ribosomal subunit protein bL21.